The sequence spans 264 residues: Thymidylate synthase (264 aa).

A dUMP-binding site is contributed by Arg-21. His-51 serves as a coordination point for (6R)-5,10-methylene-5,6,7,8-tetrahydrofolate. 126 to 127 (RR) provides a ligand contact to dUMP. Cys-146 functions as the Nucleophile in the catalytic mechanism. DUMP is bound by residues 166–169 (RSCD), Asn-177, and 207–209 (HLY). Asp-169 contacts (6R)-5,10-methylene-5,6,7,8-tetrahydrofolate. Ala-263 contacts (6R)-5,10-methylene-5,6,7,8-tetrahydrofolate.

The protein belongs to the thymidylate synthase family. Bacterial-type ThyA subfamily. In terms of assembly, homodimer.

Its subcellular location is the cytoplasm. The catalysed reaction is dUMP + (6R)-5,10-methylene-5,6,7,8-tetrahydrofolate = 7,8-dihydrofolate + dTMP. The protein operates within pyrimidine metabolism; dTTP biosynthesis. Its function is as follows. Catalyzes the reductive methylation of 2'-deoxyuridine-5'-monophosphate (dUMP) to 2'-deoxythymidine-5'-monophosphate (dTMP) while utilizing 5,10-methylenetetrahydrofolate (mTHF) as the methyl donor and reductant in the reaction, yielding dihydrofolate (DHF) as a by-product. This enzymatic reaction provides an intracellular de novo source of dTMP, an essential precursor for DNA biosynthesis. The sequence is that of Thymidylate synthase from Baumannia cicadellinicola subsp. Homalodisca coagulata.